We begin with the raw amino-acid sequence, 234 residues long: Probable transcriptional regulatory protein Psyr_3028 (234 aa).

The protein belongs to the TACO1 family.

It is found in the cytoplasm. This is Probable transcriptional regulatory protein Psyr_3028 from Pseudomonas syringae pv. syringae (strain B728a).